The primary structure comprises 711 residues: MKQLFATTSRGFEELLKVELTELGAQEAKVVQGGVHYQADDETLYRTLLWSRLASRILFPLIETKIYSDLDLYAAVSGFNWLGLFDERVTFFVDFNGTNQEIRHTQFGAMRVKDGIVDYFERQGKARPDVDKIQPDVRIHAYLNRENLVISLDLSGEALHLRGYREDAGQAPLRETLAAAIVLRSGWQVGSPLVDPMCGSGTLLIEAAQMEAKIAPQLYRLHWGFDFWKAHNQSAWEKVKNEAIELAEEKQREIQPHFYGFDLDHRVLKKAQKNAQNAGVSHLIKWQQGDVAALKNPRLNEVGTVICNPPYGERLGTTPALIALYSVFGQRLKKEFCGWNVSVFSSESTLLDCLRMRASRQFKAKNGPLDCVQKNYQVSERKSDEITAENELEFNRTSEVATDFANRLQKNIKKISKWAKQQGLDAYRLYDADLPEYNLAVDRYADYIVVQEYAAPKNIDENKARQRLLDAVTATLHVTGVETNKLILKVRQKQKGTNQYEKLANKGEYFYVNEYGAQLWVNLTDYLDTGLFLDHRLTRKMIGALAKGKDFLNLFAYTGSATVHAALGGAKSTTTVDMSNTYLNWAEQNLILNDIEGKQHKLIQADCLQWLEKCDRQFDLIFVDPPTFSNSKRMEDSWDVQRDHVKLMRNLKRVLSNNGTIVFSNNKRGFKMNLVALEELGLSAVEISHKTLPLDFERNKQIHNCWMIQHI.

The region spanning 43 to 154 (TLYRTLLWSR…RENLVISLDL (112 aa)) is the THUMP domain.

The protein belongs to the methyltransferase superfamily. RlmKL family.

The protein localises to the cytoplasm. The enzyme catalyses guanosine(2445) in 23S rRNA + S-adenosyl-L-methionine = N(2)-methylguanosine(2445) in 23S rRNA + S-adenosyl-L-homocysteine + H(+). It catalyses the reaction guanosine(2069) in 23S rRNA + S-adenosyl-L-methionine = N(2)-methylguanosine(2069) in 23S rRNA + S-adenosyl-L-homocysteine + H(+). In terms of biological role, specifically methylates the guanine in position 2445 (m2G2445) and the guanine in position 2069 (m7G2069) of 23S rRNA. This is Ribosomal RNA large subunit methyltransferase K/L from Haemophilus influenzae (strain 86-028NP).